A 202-amino-acid polypeptide reads, in one-letter code: Imidazoleglycerol-phosphate dehydratase (202 aa).

Belongs to the imidazoleglycerol-phosphate dehydratase family.

It localises to the cytoplasm. It carries out the reaction D-erythro-1-(imidazol-4-yl)glycerol 3-phosphate = 3-(imidazol-4-yl)-2-oxopropyl phosphate + H2O. It participates in amino-acid biosynthesis; L-histidine biosynthesis; L-histidine from 5-phospho-alpha-D-ribose 1-diphosphate: step 6/9. In Lactococcus lactis subsp. cremoris (strain SK11), this protein is Imidazoleglycerol-phosphate dehydratase.